The following is a 440-amino-acid chain: Armadillo-like helical domain containing protein 1 (440 aa).

This chain is Armadillo-like helical domain containing protein 1, found in Homo sapiens (Human).